The chain runs to 453 residues: Probable glycine dehydrogenase (decarboxylating) subunit 1 (453 aa).

This sequence belongs to the GcvP family. N-terminal subunit subfamily. In terms of assembly, the glycine cleavage system is composed of four proteins: P, T, L and H. In this organism, the P 'protein' is a heterodimer of two subunits.

It catalyses the reaction N(6)-[(R)-lipoyl]-L-lysyl-[glycine-cleavage complex H protein] + glycine + H(+) = N(6)-[(R)-S(8)-aminomethyldihydrolipoyl]-L-lysyl-[glycine-cleavage complex H protein] + CO2. Its function is as follows. The glycine cleavage system catalyzes the degradation of glycine. The P protein binds the alpha-amino group of glycine through its pyridoxal phosphate cofactor; CO(2) is released and the remaining methylamine moiety is then transferred to the lipoamide cofactor of the H protein. The polypeptide is Probable glycine dehydrogenase (decarboxylating) subunit 1 (Dictyoglomus turgidum (strain DSM 6724 / Z-1310)).